The chain runs to 147 residues: Protein AfaD (147 aa).

The N-terminal stretch at 1–26 is a signal peptide; the sequence is MNGSIRKMMRVTCGMLLMVMSGVSQA. Residues 91 to 111 form a disordered region; the sequence is RTGGDGWSPVKGEGGKGVSRP.

The protein to E.coli AggB.

The sequence is that of Protein AfaD (afaD) from Escherichia coli.